The following is a 198-amino-acid chain: Orotate phosphoribosyltransferase (198 aa).

5-phospho-alpha-D-ribose 1-diphosphate-binding positions include arginine 108, lysine 109, lysine 112, histidine 114, and 135–143 (EDVVTTGKS). Orotate is bound by residues threonine 139 and arginine 167.

It belongs to the purine/pyrimidine phosphoribosyltransferase family. PyrE subfamily. As to quaternary structure, homodimer. It depends on Mg(2+) as a cofactor.

It catalyses the reaction orotidine 5'-phosphate + diphosphate = orotate + 5-phospho-alpha-D-ribose 1-diphosphate. The protein operates within pyrimidine metabolism; UMP biosynthesis via de novo pathway; UMP from orotate: step 1/2. Catalyzes the transfer of a ribosyl phosphate group from 5-phosphoribose 1-diphosphate to orotate, leading to the formation of orotidine monophosphate (OMP). The chain is Orotate phosphoribosyltransferase from Synechocystis sp. (strain ATCC 27184 / PCC 6803 / Kazusa).